We begin with the raw amino-acid sequence, 165 residues long: Ubiquitin-like protein 4B (165 aa).

One can recognise a Ubiquitin-like domain in the interval 1–76; sequence MFLTVKLLLG…ISVVVRPLEK (76 aa). A disordered region spans residues 139–165; the sequence is EPLAQPTGEREPEVLSPNKEEEKEAVQ. Over residues 146-165 the composition is skewed to basic and acidic residues; it reads GEREPEVLSPNKEEEKEAVQ.

The protein resides in the cytoplasm. This is Ubiquitin-like protein 4B (UBL4B) from Bos taurus (Bovine).